A 269-amino-acid chain; its full sequence is 5'-nucleotidase SurE (269 aa).

4 residues coordinate a divalent metal cation: Asp-11, Asp-12, Ser-43, and Asn-101.

It belongs to the SurE nucleotidase family. A divalent metal cation serves as cofactor.

Its subcellular location is the cytoplasm. It carries out the reaction a ribonucleoside 5'-phosphate + H2O = a ribonucleoside + phosphate. Its function is as follows. Nucleotidase that shows phosphatase activity on nucleoside 5'-monophosphates. The sequence is that of 5'-nucleotidase SurE from Prochlorococcus marinus (strain AS9601).